A 541-amino-acid polypeptide reads, in one-letter code: CTP synthase (541 aa).

The interval 1 to 268 is amidoligase domain; sequence MAKFIFITGG…AEIVCRRLGL (268 aa). Residue Ser-13 participates in CTP binding. Position 13 (Ser-13) interacts with UTP. ATP-binding positions include 14 to 19 and Asp-71; that span reads GLGKGI. 2 residues coordinate Mg(2+): Asp-71 and Glu-141. Residues 148-150, 189-194, and Lys-225 contribute to the CTP site; these read DIE and KTKPTQ. Residues 189–194 and Lys-225 each bind UTP; that span reads KTKPTQ. The Glutamine amidotransferase type-1 domain occupies 293-539; it reads EIALVGKYVA…IKAALEYRAG (247 aa). Gly-359 provides a ligand contact to L-glutamine. Cys-386 (nucleophile; for glutamine hydrolysis) is an active-site residue. L-glutamine-binding positions include 387–390, Glu-410, and Arg-467; that span reads MGMQ. Active-site residues include His-512 and Glu-514.

It belongs to the CTP synthase family. In terms of assembly, homotetramer.

It catalyses the reaction UTP + L-glutamine + ATP + H2O = CTP + L-glutamate + ADP + phosphate + 2 H(+). The enzyme catalyses L-glutamine + H2O = L-glutamate + NH4(+). The catalysed reaction is UTP + NH4(+) + ATP = CTP + ADP + phosphate + 2 H(+). It functions in the pathway pyrimidine metabolism; CTP biosynthesis via de novo pathway; CTP from UDP: step 2/2. With respect to regulation, allosterically activated by GTP, when glutamine is the substrate; GTP has no effect on the reaction when ammonia is the substrate. The allosteric effector GTP functions by stabilizing the protein conformation that binds the tetrahedral intermediate(s) formed during glutamine hydrolysis. Inhibited by the product CTP, via allosteric rather than competitive inhibition. In terms of biological role, catalyzes the ATP-dependent amination of UTP to CTP with either L-glutamine or ammonia as the source of nitrogen. Regulates intracellular CTP levels through interactions with the four ribonucleotide triphosphates. This is CTP synthase from Symbiobacterium thermophilum (strain DSM 24528 / JCM 14929 / IAM 14863 / T).